The primary structure comprises 87 residues: Phosphocarrier protein HPr (87 aa).

One can recognise an HPr domain in the interval 1–87 (MAEKTFTITA…EEVIKEGLGE (87 aa)). Catalysis depends on histidine 15, which acts as the Pros-phosphohistidine intermediate. A Phosphoserine; by HPrK/P modification is found at serine 46.

The protein belongs to the HPr family.

The protein localises to the cytoplasm. Its activity is regulated as follows. Phosphorylation on Ser-46 inhibits the phosphoryl transfer from enzyme I to HPr. Its function is as follows. General (non sugar-specific) component of the phosphoenolpyruvate-dependent sugar phosphotransferase system (sugar PTS). This major carbohydrate active-transport system catalyzes the phosphorylation of incoming sugar substrates concomitantly with their translocation across the cell membrane. The phosphoryl group from phosphoenolpyruvate (PEP) is transferred to the phosphoryl carrier protein HPr by enzyme I. Phospho-HPr then transfers it to the PTS EIIA domain. Functionally, P-Ser-HPr interacts with the catabolite control protein A (CcpA), forming a complex that binds to DNA at the catabolite response elements cre, operator sites preceding a large number of catabolite-regulated genes. Thus, P-Ser-HPr is a corepressor in carbon catabolite repression (CCR), a mechanism that allows bacteria to coordinate and optimize the utilization of available carbon sources. P-Ser-HPr also plays a role in inducer exclusion, in which it probably interacts with several non-PTS permeases and inhibits their transport activity. The sequence is that of Phosphocarrier protein HPr (ptsH) from Halalkalibacterium halodurans (strain ATCC BAA-125 / DSM 18197 / FERM 7344 / JCM 9153 / C-125) (Bacillus halodurans).